We begin with the raw amino-acid sequence, 515 residues long: Cytidine and dCMP deaminase domain-containing protein 1 (515 aa).

Composition is skewed to polar residues over residues 1–11 and 18–27; these read MKEAGQMQNLE and SVSTQTGSMT. Disordered regions lie at residues 1-27 and 56-83; these read MKEAGQMQNLESARAGRSVSTQTGSMT and RQKSQKNEEGKHGPLGDNEEMTRVSTDK. Residues 60–83 show a composition bias toward basic and acidic residues; that stretch reads QKNEEGKHGPLGDNEEMTRVSTDK. A CMP/dCMP-type deaminase 1 domain is found at 71-169; that stretch reads GDNEEMTRVS…SLLTEASSSE (99 aa). Zn(2+)-binding residues include histidine 110, cysteine 135, and cysteine 138. Residues 272 to 284 carry the Nuclear export signal motif; the sequence is NLRQNMKDLILLL. Residues 318-483 enclose the CMP/dCMP-type deaminase 2 domain; sequence EIARHCMVQA…LNPSEAYGLE (166 aa). Histidine 399 lines the Zn(2+) pocket. Glutamate 401 serves as the catalytic Proton donor. Positions 427 and 430 each coordinate Zn(2+). Residues 481–515 are disordered; the sequence is GLEQNEPERRENGVLRPVPQKEEQHQDKKLRLGIH. Over residues 486–515 the composition is skewed to basic and acidic residues; that stretch reads EPERRENGVLRPVPQKEEQHQDKKLRLGIH. Positions 489-511 match the Bipartite nuclear localization signal motif; that stretch reads RRENGVLRPVPQKEEQHQDKKLR.

Belongs to the cytidine and deoxycytidylate deaminase family. The cofactor is Zn(2+).

It is found in the cytoplasm. The protein resides in the nucleus. The catalysed reaction is 2'-deoxycytidine + H2O + H(+) = 2'-deoxyuridine + NH4(+). It carries out the reaction cytidine + H2O + H(+) = uridine + NH4(+). Catalyzes the deamination of cytidine and deoxycytidine into uridine and deoxyuridine, respectively. May play an important role in testicular development and spermatogenesis. The chain is Cytidine and dCMP deaminase domain-containing protein 1 (CDADC1) from Macaca fascicularis (Crab-eating macaque).